A 130-amino-acid polypeptide reads, in one-letter code: Small ribosomal subunit protein uS11c (130 aa).

This sequence belongs to the universal ribosomal protein uS11 family. In terms of assembly, part of the 30S ribosomal subunit.

It localises to the plastid. The protein resides in the chloroplast. This chain is Small ribosomal subunit protein uS11c, found in Chaetosphaeridium globosum (Charophycean green alga).